We begin with the raw amino-acid sequence, 390 residues long: Anhydro-N-acetylmuramic acid kinase (390 aa).

Residue 9 to 16 (GTSLDGID) coordinates ATP.

It belongs to the anhydro-N-acetylmuramic acid kinase family.

It catalyses the reaction 1,6-anhydro-N-acetyl-beta-muramate + ATP + H2O = N-acetyl-D-muramate 6-phosphate + ADP + H(+). Its pathway is amino-sugar metabolism; 1,6-anhydro-N-acetylmuramate degradation. It participates in cell wall biogenesis; peptidoglycan recycling. Its function is as follows. Catalyzes the specific phosphorylation of 1,6-anhydro-N-acetylmuramic acid (anhMurNAc) with the simultaneous cleavage of the 1,6-anhydro ring, generating MurNAc-6-P. Is required for the utilization of anhMurNAc either imported from the medium or derived from its own cell wall murein, and thus plays a role in cell wall recycling. The sequence is that of Anhydro-N-acetylmuramic acid kinase from Bacillus cereus (strain B4264).